Here is a 927-residue protein sequence, read N- to C-terminus: Tubulin monoglycylase TTLL3 (927 aa).

Over residues 35–47 (RSQPSELRTNFSS) the composition is skewed to polar residues. Disordered stretches follow at residues 35 to 113 (RSQP…PQPV) and 194 to 227 (HPPGTALPAPQKDLDSSMLGDSDATEDEDEEENE). Residues 216–226 (DATEDEDEEEN) show a composition bias toward acidic residues. Residues 345-702 (VLKLVVKLEE…DRRLDRSCDT (358 aa)) enclose the TTL domain. ATP-binding positions include Lys476, 482–483 (RG), 514–517 (QKYI), 527–529 (KFD), and 571–572 (CN). A protein is bound at residue Arg482. 3 residues coordinate Mg(2+): Asp649, Glu662, and Asn664. Glu662 is a binding site for ATP. Disordered stretches follow at residues 735 to 799 (VPVG…SGKG) and 897 to 927 (EEGHRQRAAPRPSSAPGKGLSSTEPCSKTET). Over residues 752-769 (LTQQGSGESKDSGSPTHR) the composition is skewed to polar residues. Residues 776–788 (ARAESLEHTEKPE) are compositionally biased toward basic and acidic residues. Residues 916–927 (LSSTEPCSKTET) are compositionally biased toward polar residues.

The cofactor is Mg(2+). As to expression, highly expressed in brain and testis. Expressed in heart, kidney, liver, lung, muscle, spleen, trachea and colon. Expressed in sperm flagellum. In the brain, specifically expressed in ependymal cilia.

The protein resides in the cytoplasm. It is found in the cytoskeleton. Its subcellular location is the cell projection. It localises to the cilium. The protein localises to the cilium axoneme. The protein resides in the flagellum axoneme. The enzyme catalyses L-glutamyl-[protein] + glycine + ATP = glycyl-L-glutamyl-[protein] + ADP + phosphate + H(+). Functionally, monoglycylase which modifies alpha- and beta-tubulin, adding a single glycine on the gamma-carboxyl groups of specific glutamate residues to generate monoglycine side chains within the C-terminal tail of tubulin. Not involved in elongation step of the polyglycylation reaction. Preferentially glycylates a beta-tail peptide over the alpha-tail, although shifts its preference toward alpha-tail as beta-tail glutamylation increases. Competes with polyglutamylases for modification site on beta-tubulin substrate, thereby creating an anticorrelation between glycylation and glutamylation reactions. Together with TTLL8, mediates microtubule glycylation of primary and motile cilia, which is essential for their stability and maintenance. Involved in microtubule glycylation of primary cilia in colon which controls cell proliferation of epithelial cells and plays an essential role in colon cancer development. Together with TTLL8, glycylates sperm flagella which regulates axonemal dynein motor activity, thereby controlling flagellar beat, directional sperm swimming and male fertility. This Mus musculus (Mouse) protein is Tubulin monoglycylase TTLL3.